The sequence spans 244 residues: uncharacterized protein (244 aa).

A run of 6 helical transmembrane segments spans residues 21 to 41, 44 to 64, 66 to 86, 139 to 159, 165 to 185, and 199 to 219; these read FPYS…YGIY, ALGF…AGSV, FIAA…LITL, WYMF…AAMG, VLPF…LVIF, and LLGL…YFLI.

Belongs to the AzlC family.

The protein localises to the cell membrane. This is an uncharacterized protein from Haemophilus influenzae (strain ATCC 51907 / DSM 11121 / KW20 / Rd).